A 221-amino-acid chain; its full sequence is Translation initiation factor 6 (221 aa).

It belongs to the eIF-6 family.

Its function is as follows. Binds to the 50S ribosomal subunit and prevents its association with the 30S ribosomal subunit to form the 70S initiation complex. The chain is Translation initiation factor 6 from Nitrosopumilus maritimus (strain SCM1).